We begin with the raw amino-acid sequence, 138 residues long: Holo-[acyl-carrier-protein] synthase (138 aa).

Positions 8 and 57 each coordinate Mg(2+).

This sequence belongs to the P-Pant transferase superfamily. AcpS family. The cofactor is Mg(2+).

Its subcellular location is the cytoplasm. The catalysed reaction is apo-[ACP] + CoA = holo-[ACP] + adenosine 3',5'-bisphosphate + H(+). Its function is as follows. Transfers the 4'-phosphopantetheine moiety from coenzyme A to a Ser of acyl-carrier-protein. The sequence is that of Holo-[acyl-carrier-protein] synthase from Phenylobacterium zucineum (strain HLK1).